A 719-amino-acid chain; its full sequence is Leucine-rich repeat and fibronectin type-III domain-containing protein 5 (719 aa).

The signal sequence occupies residues 1–17 (MEKILFYLFLIGIAVKA). Residues 18 to 51 (QICPKRCVCQILSPNLATLCAKKGLLFVPPNIDR) form the LRRNT domain. The Extracellular segment spans residues 18 to 529 (QICPKRCVCQ…MQSQFLGGTM (512 aa)). LRR repeat units follow at residues 52–73 (RTVELRLADNFVTNIKRKDFAN), 76–97 (SLVDLTLSRNTISFITPHAFAD), 100–121 (NLRALHLNSNRLTKITNDMFSG), 124–145 (NLHHLILNNNQLTLISSTAFDD), 148–169 (ALEELDLSYNNLETIPWDAVEK), 172–193 (SLHTLSLDHNMIDNIPKGTFSH), and 196–217 (KMTRLDVTSNKLQKLPPDPLFQ). Residue Asn73 is glycosylated (N-linked (GlcNAc...) asparagine). An LRRCT domain is found at 240–286 (NPLHCNCELLWLRRLSREDDLETCASPPLLTGRYFWSIPEEEFLCEP). Residues 287–373 (PLITRHTHEM…GEATQIVDLH (87 aa)) form the Ig-like domain. An intrachain disulfide couples Cys308 to Cys357. N-linked (GlcNAc...) asparagine glycosylation is found at Asn330, Asn339, Asn382, Asn406, and Asn452. Positions 385 to 414 (NHIHEPDPGSSDISTSTKSGSNTSSSNGDT) are disordered. The span at 393–414 (GSSDISTSTKSGSNTSSSNGDT) shows a compositional bias: low complexity. The Fibronectin type-III domain maps to 414-503 (TKLSQDKIVV…ITSLTATRVV (90 aa)). A helical membrane pass occupies residues 530–550 (IIIIGGIIVASVLVFIIILMI). The Cytoplasmic segment spans residues 551–719 (RYKVCNNNGQ…VQETQRLELI (169 aa)). The segment covering 615 to 627 (ETCSSQDSSTTTS) has biased composition (low complexity). A disordered region spans residues 615–694 (ETCSSQDSST…SVTEGPTSKR (80 aa)). Composition is skewed to polar residues over residues 628–641 (ALPPSWTSSTSVSQ) and 649–677 (TKPSTEPQNEAVTNVESQNTNRNNSTALQ).

The protein belongs to the LRFN family. In terms of assembly, can form heteromeric complexes with LRFN1, LRFN2, LRFN3 and LFRN4. Able to form homomeric complexes across cell junctions, between adjacent cells. Does not interact with DLG1, DLG2, DLG3 and DLG4.

Its subcellular location is the membrane. In terms of biological role, cell adhesion molecule that mediates homophilic cell-cell adhesion in a Ca(2+)-independent manner. Promotes neurite outgrowth in hippocampal neurons. This is Leucine-rich repeat and fibronectin type-III domain-containing protein 5 (LRFN5) from Homo sapiens (Human).